Here is a 2167-residue protein sequence, read N- to C-terminus: Myosin-VIIa (2167 aa).

Residues 63–733 (QGVEDMISLG…HDLFLEQERD (671 aa)) enclose the Myosin motor domain. 156–163 (GESGAGKT) contacts ATP. 2 actin-binding regions span residues 612–634 (LDAL…KPNE) and 712–726 (QLGH…AHDL). IQ domains lie at 736–758 (LTRK…RFLR), 759–788 (LRAA…GYMR), 805–827 (LRGH…EYGH), and 828–857 (KMWA…EHKQ). Residues 886 to 919 (QHYRDRLHELERREIQEQLENRRRVEVNMNIIND) adopt a coiled-coil conformation. The 238-residue stretch at 1008–1245 (YAKKALKHPL…PSWLELQATK (238 aa)) folds into the MyTH4 1 domain. The FERM 1 domain maps to 1250 to 1560 (IMLPITFMDG…YFLDGLKKRS (311 aa)). Residues 1558–1627 (KRSKYVIALQ…PAETVYVLPT (70 aa)) enclose the SH3 domain. S1651 and S1654 each carry phosphoserine. The region spanning 1701–1849 (YSRDPIKAPL…PHQVEVEAIQ (149 aa)) is the MyTH4 2 domain. The FERM 2 domain occupies 1855–2158 (IFHKVYFPDD…SYISLMLTNM (304 aa)). T2045 is subject to Phosphothreonine.

Belongs to the TRAFAC class myosin-kinesin ATPase superfamily. Myosin family. Homodimerizes in a two headed molecule through the formation of a coiled-coil rod. Homodimers motility is approximately 8-10 times slower than that of myosin V, and its step size is 30 nm, which is consistent with the presence of five IQ motifs in its neck region. Interacts with Cad99C (via the cytoplasmic domain). Interacts with zip and Sans. In terms of tissue distribution, expressed in the setae, micro- and macrochaetae on the head, thorax and wing.

It localises to the cytoplasm. It is found in the cell cortex. The protein localises to the cell projection. Its subcellular location is the microvillus. In terms of biological role, myosins are actin-based motor molecules with ATPase activity. Unconventional myosins serve in intracellular movements: can function in cells as a single-molecule cargo transporter. A very slow and high-duty-ratio motor, may be suitable for tension maintenance of actin filaments. Their highly divergent tails are presumed to bind to membranous compartments, which would be moved relative to actin filaments. Plays a key role in the formation of cellular projections and other actin-based functions required for embryonic and larval viability. Necessary for auditory transduction: plays a role in Johnston's organ organization by functioning in scolopidial apical attachment and therefore to acoustic stimulus propagation from the antenna a2/a3 joint to transducing elements. Interaction with the myosin zip may be important for its function in scolopidial apical attachment. During oogenesis it has Cad99c-dependent and Cad99c-independent roles in regulating the shape and spacing of the follicle cell microvilli which secrete eggshell material such as the vitelline membrane. May be required for the normal expression of Cad99c in the follicle cell microvilli. This is Myosin-VIIa from Drosophila melanogaster (Fruit fly).